The chain runs to 147 residues: Hemoglobin subunit beta (147 aa).

The Globin domain maps to 3-147; that stretch reads HWTAEEKQLI…VAHALARKYH (145 aa). Positions 64 and 93 each coordinate heme b.

This sequence belongs to the globin family. Heterotetramer of two alpha chains and two beta chains. As to expression, red blood cells.

In terms of biological role, involved in oxygen transport from the lung to the various peripheral tissues. This chain is Hemoglobin subunit beta (HBB), found in Anas platyrhynchos (Mallard).